The following is a 543-amino-acid chain: MAAAKAEMQLMSPLQISDPFGSFPHSPTMDNYPKLEEMMLLSNGAPQFLGAAGAPEGSGSNSSSSSSGGGGGGGGGSNSSSSSSTFNPQADTGEQPYEHLTAESFPDISLNNEKVLVETSYPSQTTRLPPITYTGRFSLEPAPNSGNTLWPEPLFSLVSGLVSMTNPPASSSSAPSPAASSASASQSPPLSCAVPSNDSSPIYSAAPTFPTPNTDIFPEPQSQAFPGSAGTALQYPPPAYPAAKGGFQVPMIPDYLFPQQQGDLGLGTPDQKPFQGLESRTQQPSLTPLSTIKAFATQSGSQDLKALNTSYQSQLIKPSRMRKYPNRPSKTPPHERPYACPVESCDRRFSRSDELTRHIRIHTGQKPFQCRICMRNFSRSDHLTTHIRTHTGEKPFACDICGRKFARSDERKRHTKIHLRQKDKKADKSVVASSATSSLSSYPSPVATSYPSPVTTSYPSPATTSYPSPVPTSFSSPGSSTYPSPVHSGFPSPSVATTYSSVPPAFPAQVSSFPSSAVTNSFSASTGLSDMTATFSPRTIEIC.

3 disordered regions span residues 1 to 105 (MAAA…AESF), 165 to 213 (TNPP…PTPN), and 264 to 284 (LGLG…TQQP). Residues 57 to 66 (GSGSNSSSSS) show a composition bias toward low complexity. A compositionally biased stretch (gly residues) spans 67–77 (SGGGGGGGGGS). Positions 167–189 (PPASSSSAPSPAASSASASQSPP) are enriched in low complexity. Lysine 305 participates in a covalent cross-link: Glycyl lysine isopeptide (Lys-Gly) (interchain with G-Cter in SUMO2). The segment at 318–339 (PSRMRKYPNRPSKTPPHERPYA) is disordered. 3 C2H2-type zinc fingers span residues 338-362 (YACP…IRIH), 368-390 (FQCR…IRTH), and 396-418 (FACD…TKIH). A disordered region spans residues 409–487 (DERKRHTKIH…GSSTYPSPVH (79 aa)). The span at 413–423 (RHTKIHLRQKD) shows a compositional bias: basic residues. Low complexity predominate over residues 429–486 (SVVASSATSSLSSYPSPVATSYPSPVTTSYPSPATTSYPSPVPTSFSSPGSSTYPSPV).

It belongs to the EGR C2H2-type zinc-finger protein family. As to quaternary structure, interacts with SNAI1 and SP1 upon 12-O-tetradecanoylphorbol-13-acetate (TPA) induction. Detected in neutrophils (at protein level).

Its subcellular location is the nucleus. The protein resides in the cytoplasm. In terms of biological role, transcriptional regulator. Recognizes and binds to the DNA sequence 5'-GCG(T/G)GGGCG-3'(EGR-site) in the promoter region of target genes. Binds double-stranded target DNA, irrespective of the cytosine methylation status. Regulates the transcription of numerous target genes, and thereby plays an important role in regulating the response to growth factors, DNA damage, and ischemia. Plays a role in the regulation of cell survival, proliferation and cell death. Activates expression of p53/TP53 and TGFB1, and thereby helps prevent tumor formation. Required for normal progress through mitosis and normal proliferation of hepatocytes after partial hepatectomy. Mediates responses to ischemia and hypoxia; regulates the expression of proteins such as IL1B and CXCL2 that are involved in inflammatory processes and development of tissue damage after ischemia. Regulates biosynthesis of luteinizing hormone (LHB) in the pituitary. Regulates the amplitude of the expression rhythms of clock genes: BMAL1, PER2 and NR1D1 in the liver via the activation of PER1 (clock repressor) transcription. Regulates the rhythmic expression of core-clock gene BMAL1 in the suprachiasmatic nucleus (SCN). The sequence is that of Early growth response protein 1 (EGR1) from Homo sapiens (Human).